The following is a 312-amino-acid chain: Ribosomal RNA small subunit methyltransferase H (312 aa).

S-adenosyl-L-methionine contacts are provided by residues 33–35 (GGY), D51, F78, D97, and Q104.

Belongs to the methyltransferase superfamily. RsmH family.

Its subcellular location is the cytoplasm. It catalyses the reaction cytidine(1402) in 16S rRNA + S-adenosyl-L-methionine = N(4)-methylcytidine(1402) in 16S rRNA + S-adenosyl-L-homocysteine + H(+). In terms of biological role, specifically methylates the N4 position of cytidine in position 1402 (C1402) of 16S rRNA. The chain is Ribosomal RNA small subunit methyltransferase H from Orientia tsutsugamushi (strain Ikeda) (Rickettsia tsutsugamushi).